Consider the following 387-residue polypeptide: Alpha-sarcoglycan (387 aa).

The N-terminal stretch at M1–A23 is a signal peptide. Residues Q24–T293 lie on the Extracellular side of the membrane. 2 N-linked (GlcNAc...) asparagine glycosylation sites follow: N174 and N246. Residues L294 to F314 form a helical membrane-spanning segment. The Cytoplasmic portion of the chain corresponds to R315–H387. S377 carries the phosphoserine modification.

The protein belongs to the sarcoglycan alpha/epsilon family. In terms of assembly, cross-link to form 2 major subcomplexes: one consisting of SGCB, SGCD and SGCG and the other consisting of SGCB and SGCD. The association between SGCB and SGCG is particularly strong while SGCA is loosely associated with the other sarcoglycans. Interacts with the syntrophin SNTA1. As to expression, striated muscle, both skeletal and cardiac.

The protein localises to the cell membrane. It localises to the sarcolemma. It is found in the cytoplasm. The protein resides in the cytoskeleton. In terms of biological role, component of the sarcoglycan complex, a subcomplex of the dystrophin-glycoprotein complex which forms a link between the F-actin cytoskeleton and the extracellular matrix. This Mus musculus (Mouse) protein is Alpha-sarcoglycan (Sgca).